The chain runs to 222 residues: Small ribosomal subunit protein uS7m (222 aa).

The transit peptide at 1–14 directs the protein to the mitochondrion; the sequence is MSKKLANFAQKRWI.

It belongs to the universal ribosomal protein uS7 family. As to quaternary structure, component of the mitochondrial ribosome small subunit (28S) which comprises a 12S rRNA and about 30 distinct proteins.

Its subcellular location is the mitochondrion. This Caenorhabditis briggsae protein is Small ribosomal subunit protein uS7m (mrps-7).